Here is a 418-residue protein sequence, read N- to C-terminus: Somatostatin receptor type 3 (418 aa).

The interval 1–21 (MDMLHPSSVSTTSEPENASSA) is disordered. Over 1–43 (MDMLHPSSVSTTSEPENASSAWPPDATLGNVSAGPSPAGLAVS) the chain is Extracellular. A compositionally biased stretch (polar residues) spans 7 to 20 (SSVSTTSEPENASS). 2 N-linked (GlcNAc...) asparagine glycosylation sites follow: N17 and N30. The chain crosses the membrane as a helical span at residues 44 to 69 (GVLIPLVYLVVCVVGLLGNSLVIYVV). Residues 70–79 (LRHTASPSVT) lie on the Cytoplasmic side of the membrane. Residues 80–101 (NVYILNLALADELFMLGLPFLA) form a helical membrane-spanning segment. Residues 102–116 (AQNALSYWPFGSLMC) are Extracellular-facing. C116 and C191 are disulfide-bonded. The chain crosses the membrane as a helical span at residues 117–138 (RLVMAVDGINQFTSIFCLTVMS). Residues 139-161 (VDRYLAVVHPTRSARWRTAPVAR) lie on the Cytoplasmic side of the membrane. A helical membrane pass occupies residues 162–181 (TVSAAVWVASAVVVLPVVVF). The Extracellular portion of the chain corresponds to 182-205 (SGVPRGMSTCHMQWPEPAAAWRAG). The chain crosses the membrane as a helical span at residues 206–231 (FIIYTAALGFFGPLLVICLCYLLIVV). At 232–257 (KVRSAGRRVWAPSCQRRRRSERRVTR) the chain is on the cytoplasmic side. Residues 258–279 (MVVAVVALFVLCWMPFYVLNIV) traverse the membrane as a helical segment. Topologically, residues 280-293 (NVVCPLPEEPAFFG) are extracellular. Residues 294 to 316 (LYFLVVALPYANSCANPILYGFL) traverse the membrane as a helical segment. Residues 317–418 (SYRFKQGFRR…KSSTMRISYL (102 aa)) are Cytoplasmic-facing. 2 positions are modified to phosphoserine: S332 and S337. The tract at residues 335-418 (VRSQEPTVGP…KSSTMRISYL (84 aa)) is disordered. The residue at position 348 (T348) is a Phosphothreonine. Positions 348 to 360 (TEEEDEEEEDGEE) are enriched in acidic residues. The segment covering 361–371 (SREGGKGKEMN) has biased composition (basic and acidic residues). Polar residues-rich tracts occupy residues 373–385 (RVSQITQPGTSGQ) and 395–418 (KEQQLLPQEASTGEKSSTMRISYL).

Belongs to the G-protein coupled receptor 1 family. As to quaternary structure, homodimer and heterodimer with SSTR2. Heterodimerization with SSTR2 inactivates SSTR3 receptor function. Post-translationally, phosphorylated. Phosphorylation increases upon somatostatin binding. As to expression, brain, pituitary and pancreas.

It is found in the cell membrane. Functionally, receptor for somatostatin-14 and -28. This receptor is coupled via pertussis toxin sensitive G proteins to inhibition of adenylyl cyclase. The polypeptide is Somatostatin receptor type 3 (SSTR3) (Homo sapiens (Human)).